The following is a 169-amino-acid chain: Calfumirin-1 (169 aa).

4 EF-hand domains span residues 6-41 (NIVE…KKAF), 42-77 (NPER…DKAL), 93-128 (EVEE…TGAK), and 129-164 (DPEK…VQKL). Ca(2+)-binding residues include Asp-19, Asn-21, Asp-23, Glu-25, Glu-30, Asp-55, Asp-57, Asp-59, Lys-61, Glu-66, Asp-108, Asn-110, Asp-112, Glu-117, Asp-142, Asn-144, Asp-146, Thr-148, and Glu-153.

In terms of biological role, may be involved in the phase-shift of cells from growth to differentiation. The chain is Calfumirin-1 (cafA) from Dictyostelium discoideum (Social amoeba).